A 241-amino-acid chain; its full sequence is Ribonuclease PH (241 aa).

Residues Arg89 and 127-129 each bind phosphate; that span reads GTR.

Belongs to the RNase PH family. As to quaternary structure, homohexameric ring arranged as a trimer of dimers.

It carries out the reaction tRNA(n+1) + phosphate = tRNA(n) + a ribonucleoside 5'-diphosphate. In terms of biological role, phosphorolytic 3'-5' exoribonuclease that plays an important role in tRNA 3'-end maturation. Removes nucleotide residues following the 3'-CCA terminus of tRNAs; can also add nucleotides to the ends of RNA molecules by using nucleoside diphosphates as substrates, but this may not be physiologically important. Probably plays a role in initiation of 16S rRNA degradation (leading to ribosome degradation) during starvation. In Xanthomonas axonopodis pv. citri (strain 306), this protein is Ribonuclease PH.